The chain runs to 433 residues: G-protein coupled receptor 22 (433 aa).

The Extracellular portion of the chain corresponds to 1-45 (MCFSPILEINMQSESNITVRDDIDDINTNMYQPLSYPLSFQVSLT). The N-linked (GlcNAc...) asparagine glycan is linked to N16. The chain crosses the membrane as a helical span at residues 46 to 66 (GFLMLEIVLGLGSNLTVLVLY). Topologically, residues 67 to 85 (CMKSNLINSVSNIITMNLH) are cytoplasmic. A helical membrane pass occupies residues 86–106 (VLDVIICVGCIPLTIVILLLS). Residues 107–115 (LESNTALIC) lie on the Extracellular side of the membrane. The chain crosses the membrane as a helical span at residues 116 to 136 (CFHEACVSFASVSTAINVFAI). At 137-156 (TLDRYDISVKPANRILTMGR) the chain is on the cytoplasmic side. The chain crosses the membrane as a helical span at residues 157–177 (AVMLMISIWIFSFFSFLIPFI). Residues 178–208 (EVNFFSLQSGNTWENKTLLCVSTNEYYTELG) lie on the Extracellular side of the membrane. N-linked (GlcNAc...) asparagine glycosylation occurs at N192. Residues 209–229 (MYYHLLVQIPIFFFTVVVMLI) traverse the membrane as a helical segment. Topologically, residues 230–315 (TYTKILQALN…ERQKRVFRMS (86 aa)) are cytoplasmic. A helical membrane pass occupies residues 316-336 (LLIISTFLLCWTPISVLNTTI). Residues 337–349 (LCLGPSDLLVKLR) lie on the Extracellular side of the membrane. Residues 350-370 (LCFLVMAYGTTIFHPLLYAFT) form a helical membrane-spanning segment. At 371 to 433 (RQKFQKVLKS…KCLVPQVVTD (63 aa)) the chain is on the cytoplasmic side.

The protein belongs to the G-protein coupled receptor 1 family. High expression in adult and fetal heart tissue. Expressed in the brain, with enrichment in the accumbens, amygdala, cerebellum, cortex, and hippocampus regions.

Its subcellular location is the cell membrane. Its function is as follows. Orphan G-protein coupled receptor. Seems to act through a G(i)/G(o) mediated pathway. May be involved in ciliogenesis. This Homo sapiens (Human) protein is G-protein coupled receptor 22.